The sequence spans 475 residues: Gelsolin-like protein 1 (475 aa).

The segment at 1–131 (MGGTSLDPAL…GYRHVDDQFK (131 aa)) is actin binding, actin severing, Ca-sensitive. Positions 1–239 (MGGTSLDPAL…VRKVSKGKDD (239 aa)) are necessary for barbed end capping activity. Residues 27-105 (FVLEPVPEVD…IQNYESPLFL (79 aa)) form a Gelsolin-like 1 repeat. The tract at residues 70–73 (DEIG) is actin-actin interfilament contact point. The segment at 106 to 147 (SYFPDGIRYVSGGYESGYRHVDDQFKNWKPHLFHCKGKRNVR) is required for synapse elimination during development. Positions 133–227 (WKPHLFHCKG…STFWSYFGGV (95 aa)) are required for phosphatidylinositol 4,5-bisphosphate binding and regulation. Gelsolin-like repeat units follow at residues 148–208 (CTEV…KVHI), 275–341 (RKEQ…STQF), and 375–447 (EIAN…PPTF). The interval 240-475 (DDNYWKRLTE…VQNMRRLLFH (236 aa)) is F- and G-actin binding, Ca-independent. Residues 248–348 (TEQITLWKVS…TQFTQWFRDW (101 aa)) form an inhibitory for phosphatidylinositol 4,5-bisphosphate binding activity region.

It belongs to the villin/gelsolin family. As to quaternary structure, monomer. Binds to actin monomers and filaments. In terms of processing, cleavage by caspase ced-3 activates its actin-severing function and is required for the elimination of presynaptic components during development.

Its subcellular location is the cytoplasm. The protein resides in the cytoskeleton. Calcium-regulated, actin-modulating protein that binds to the plus (or barbed) ends of actin monomers or filaments, preventing monomer exchange (end-blocking or capping). Binds actin but does not nucleate actin polymerization, albeit slows down elongation by blocking the barbed ends. By promoting actin depolymerization, required for the elimination of presynaptic components downstream of the egl-1, ced-4 and ced-3 apoptotic pathway during larval development. In Caenorhabditis elegans, this protein is Gelsolin-like protein 1.